The following is a 396-amino-acid chain: Phosphoglycerate kinase (396 aa).

Residues aspartate 24–asparagine 26, arginine 39, histidine 62–arginine 65, arginine 120, and arginine 153 each bind substrate. ATP contacts are provided by residues lysine 203, glycine 294, glutamate 325, and glycine 352 to serine 355.

This sequence belongs to the phosphoglycerate kinase family. In terms of assembly, monomer.

Its subcellular location is the cytoplasm. It catalyses the reaction (2R)-3-phosphoglycerate + ATP = (2R)-3-phospho-glyceroyl phosphate + ADP. It participates in carbohydrate degradation; glycolysis; pyruvate from D-glyceraldehyde 3-phosphate: step 2/5. The chain is Phosphoglycerate kinase from Dictyoglomus turgidum (strain DSM 6724 / Z-1310).